A 563-amino-acid polypeptide reads, in one-letter code: Phospholipase B-like protein F (563 aa).

The signal sequence occupies residues 1–21 (MKIINSFVFIFVLLFVFNTNA). N-linked (GlcNAc...) asparagine glycosylation is found at asparagine 85, asparagine 107, asparagine 118, asparagine 121, asparagine 208, asparagine 312, and asparagine 537.

Belongs to the phospholipase B-like family.

The protein localises to the secreted. Its function is as follows. Probable phospholipase. The polypeptide is Phospholipase B-like protein F (plbF) (Dictyostelium discoideum (Social amoeba)).